We begin with the raw amino-acid sequence, 1111 residues long: Myosin IB heavy chain (1111 aa).

The region spanning 9–691 (QGTDDLVMLP…TVFLLEEALD (683 aa)) is the Myosin motor domain. 102–109 (GESGAGKT) provides a ligand contact to ATP. S332 carries the phosphoserine modification. The tract at residues 547–627 (GSLQKKRPTT…GFAYRNTFDK (81 aa)) is actin-binding. In terms of domain architecture, TH1 spans 729-913 (KERQRNSIDR…KGLIGTIASG (185 aa)). The interval 910 to 1058 (IASGLPSSTD…PAPQPSRPTA (149 aa)) is disordered. A compositionally biased stretch (polar residues) spans 914-928 (LPSSTDSTPKNYNPN). Composition is skewed to low complexity over residues 929-944 (SMSQ…QSAG), 952-967 (GAGQ…QQRP), and 991-1012 (PMGA…LPQP). The segment covering 1017 to 1040 (GAPGGRGAPMGRGAPGGGPAGAGG) has biased composition (gly residues). The SH3 domain occupies 1053–1111 (PSRPTAKALYDYDASSTDELSFKEGDIIFIVQKDNGGWTQGELKSGQKGWAPTNYLQYN).

Belongs to the TRAFAC class myosin-kinesin ATPase superfamily. Myosin family. Myosin I heavy chain is single-headed. Dimer of a heavy and a light chain. Inability to self-assemble into filaments.

The protein resides in the cell projection. It is found in the pseudopodium. Its subcellular location is the cytoplasm. The protein localises to the cell cortex. Its function is as follows. Myosin is a protein that binds to actin and has ATPase activity that is activated by actin. Myosin IB may have a role in chemotaxis and aggregation; it could serve to stabilize and even retract cortical structures, such as pseudopods and lamellopods. Involved in the whole cell motility of aggregation-stages cells. Overexpression results in significant decrease in the rate of cellular translocation and fluid-phase pinocytosis and abnormalities in the normal rearrangement of the actin cytoskeleton. The protein is Myosin IB heavy chain (myoB) of Dictyostelium discoideum (Social amoeba).